Reading from the N-terminus, the 766-residue chain is Protein zer-1 homolog (766 aa).

An N-acetylalanine modification is found at A2. LRR repeat units lie at residues 226–245 (SLVL…IVQL), 246–268 (HKLR…KLTR), and 278–302 (LGNL…KMEE). 5 ARM repeats span residues 427–467 (RSEQ…NFGI), 511–556 (DNDH…NITD), 558–600 (TPDN…NVAE), 602–643 (KELR…HIMF), and 714–756 (PDKY…HCSN).

The protein belongs to the zyg-11 family. In terms of assembly, interacts with the ELOC-ELOB/Elongin BC complex. Part of an E3 ubiquitin ligase complex including ZER1, CUL2 and Elongin BC.

Serves as substrate adapter subunit in the E3 ubiquitin ligase complex ZYG11B-CUL2-Elongin BC. Acts redudantly with ZYG11B to target substrates bearing N-terminal glycine degrons for proteasomal degradation. Involved in the clearance of proteolytic fragments generated by caspase cleavage during apoptosis since N-terminal glycine degrons are strongly enriched at caspase cleavage sites. Also important in the quality control of protein N-myristoylation in which N-terminal glycine degrons are conditionally exposed after a failure of N-myristoylation. This chain is Protein zer-1 homolog (ZER1), found in Pongo abelii (Sumatran orangutan).